The sequence spans 91 residues: DNA-directed RNA polymerase subunit omega (91 aa).

Belongs to the RNA polymerase subunit omega family. As to quaternary structure, the RNAP catalytic core consists of 2 alpha, 1 beta, 1 beta' and 1 omega subunit. When a sigma factor is associated with the core the holoenzyme is formed, which can initiate transcription.

It carries out the reaction RNA(n) + a ribonucleoside 5'-triphosphate = RNA(n+1) + diphosphate. Functionally, promotes RNA polymerase assembly. Latches the N- and C-terminal regions of the beta' subunit thereby facilitating its interaction with the beta and alpha subunits. The sequence is that of DNA-directed RNA polymerase subunit omega from Enterobacter sp. (strain 638).